The primary structure comprises 155 residues: Small ribosomal subunit protein uS7c (155 aa).

Belongs to the universal ribosomal protein uS7 family. In terms of assembly, part of the 30S ribosomal subunit.

The protein resides in the plastid. It is found in the chloroplast. One of the primary rRNA binding proteins, it binds directly to 16S rRNA where it nucleates assembly of the head domain of the 30S subunit. The polypeptide is Small ribosomal subunit protein uS7c (rps7) (Butomus umbellatus (Flowering rush)).